The sequence spans 212 residues: Golgi SNAP receptor complex member 2 (212 aa).

At M1 the chain carries N-acetylmethionine. Residues 1-190 (MDPLFQQTHK…LIEKRAFQDK (190 aa)) are Cytoplasmic-facing. The stretch at 61–107 (NKRQNARLRVDQLKYDVQHLQTALRNFQHRRHAREQQERQREELLSR) forms a coiled coil. An IxM motif; signal for cargo packaging into COPII-coated vesicles motif is present at residues 118–120 (IPM). The helical; Anchor for type IV membrane protein transmembrane segment at 191 to 211 (YFMIGGMLLTCVVMFLVVQYL) threads the bilayer. T212 is a topological domain (vesicular).

Belongs to the GOSR2 family. Part of a unique SNARE complex composed of the Golgi SNAREs GOSR1, STX5 and YKT6. Interacts (via IxM motif) with SEC24C and SEC24D; mediates GOSR2 packaging into COPII-coated vesicles. Interacts with BET1.

The protein resides in the golgi apparatus. Its subcellular location is the cis-Golgi network membrane. It is found in the golgi apparatus membrane. The protein localises to the endoplasmic reticulum membrane. Its function is as follows. Involved in transport of proteins from the cis/medial-Golgi to the trans-Golgi network. In Homo sapiens (Human), this protein is Golgi SNAP receptor complex member 2 (GOSR2).